The following is a 187-amino-acid chain: F-box protein At5g41720 (187 aa).

Residues 2-49 form the F-box domain; sequence MMNSPLDYDVLLEIMSYCPATEMAKFRLLSKECNKRSYEMSFINRHLH.

This Arabidopsis thaliana (Mouse-ear cress) protein is F-box protein At5g41720.